The sequence spans 304 residues: MLNKRISNLATILRFIALPRARNIIAPQEYIANSVPVAITRRAARNTFVFSVALTPFVLYSAFHNDSAESDFPELVEVYPGVRPFPAVLGPPELPLQTNYKLLGHGVRAVTFLSFKVYALGIYAAVDDLPLIPRTLSAEYLSTLDTEKVDAPAKEQLYKAMQDHEKSRAVVNDLLGKGLRLVAKITPIRNTDFTHLKDGLVKSILNHPAARHEGETLANGLEELRAAFTRRGSVPKDDDLVLELQATGALQLYHRDAKTGQTTTLGKVTEPLIGRYLFSQYLSGKAPLSKDTKDSVTRKIISMV.

The N-terminal 42 residues, 1–42 (MLNKRISNLATILRFIALPRARNIIAPQEYIANSVPVAITRR), are a transit peptide targeting the mitochondrion.

It belongs to the AIM18/AIM46 family.

Its subcellular location is the mitochondrion. This chain is Altered inheritance of mitochondria protein 18, mitochondrial (AIM18), found in Eremothecium gossypii (strain ATCC 10895 / CBS 109.51 / FGSC 9923 / NRRL Y-1056) (Yeast).